We begin with the raw amino-acid sequence, 113 residues long: uncharacterized protein (113 aa).

The signal sequence occupies residues 1–29 (MLVVYMCIWVLYLLLFLFLFLFIASPASL). 2 consecutive transmembrane segments (helical) span residues 34 to 54 (THILQCLYYFSLLLISGCAFF) and 56 to 76 (QVLCLVLPLFCFVLFCFFYFF).

It localises to the membrane. This is an uncharacterized protein from Saccharomyces cerevisiae (strain ATCC 204508 / S288c) (Baker's yeast).